Reading from the N-terminus, the 149-residue chain is Putative pre-16S rRNA nuclease (149 aa).

This sequence belongs to the YqgF nuclease family.

Its subcellular location is the cytoplasm. Could be a nuclease involved in processing of the 5'-end of pre-16S rRNA. The chain is Putative pre-16S rRNA nuclease from Pseudoalteromonas translucida (strain TAC 125).